Consider the following 266-residue polypeptide: Apoptosis regulator ced-9 (266 aa).

Positions 1–58 (MVDSMDMANSSQNTFRRRTMATSEMREFLSTKDAEPNNFGMQTIPESPTPSTPTRRMS) are disordered. Positions 24-35 (EMREFLSTKDAE) are enriched in basic and acidic residues. The BH4 motif lies at 75–94 (IQGFVVDYFTYRIAQNGLDW). The short motif at 156–174 (NTPCPMSYGRLIGLISFGG) is the BH1 element. Positions 208–223 (SWKEHNRSWADFMKLG) match the BH2 motif.

Belongs to the Bcl-2 family. In terms of assembly, interacts with asymmetric homodimer ced-4; the interaction sequesters ced-4. Interacts with egl-1; the interaction results in ced-4 release. Interacts with dre-1; the interaction inhibits ced-9 activity, either directly or indirectly. Interacts with dct-1. May form a complex composed of ced-9, ced-4 and mac-1.

The protein resides in the perikaryon. It is found in the synapse. Its subcellular location is the endomembrane system. It localises to the mitochondrion membrane. In terms of biological role, plays a major role in programmed cell death (PCD, apoptosis). egl-1 binds to and directly inhibits the activity of ced-9, releasing the cell death activator ced-4 from a ced-9/ced-4 containing protein complex and allowing ced-4 to activate the cell-killing caspase ced-3. During larval development, required for the elimination of transient presynaptic components downstream of egl-1 and upstream of ced-4 and ced-3 apoptotic pathway. This chain is Apoptosis regulator ced-9 (ced-9), found in Caenorhabditis briggsae.